The chain runs to 172 residues: Ribosome maturation factor RimM (172 aa).

In terms of domain architecture, PRC barrel spans 96–168; sequence DGEFYYHEII…RVQVELMEGL (73 aa).

The protein belongs to the RimM family. Binds ribosomal protein uS19.

It localises to the cytoplasm. Its function is as follows. An accessory protein needed during the final step in the assembly of 30S ribosomal subunit, possibly for assembly of the head region. Essential for efficient processing of 16S rRNA. May be needed both before and after RbfA during the maturation of 16S rRNA. It has affinity for free ribosomal 30S subunits but not for 70S ribosomes. The protein is Ribosome maturation factor RimM of Streptococcus agalactiae serotype III (strain NEM316).